The primary structure comprises 107 residues: RADAAPTVSIFPPSSEQLTSGGASVVCFLNNFYPKDINVKWKIDGSERQNGVLNSWTDQDSKDSTYSMSSTLTLTKDEYERHNSYTCEATHKTSTSPIVKSFNRNEC.

An Ig-like domain is found at 6 to 103 (PTVSIFPPSS…STSPIVKSFN (98 aa)). C27 and C87 are joined by a disulfide.

The chain is Immunoglobulin kappa constant from Mus musculus (Mouse).